We begin with the raw amino-acid sequence, 526 residues long: ATP synthase subunit alpha (526 aa).

Position 171 to 178 (171 to 178 (GDRQTGKT)) interacts with ATP.

It belongs to the ATPase alpha/beta chains family. F-type ATPases have 2 components, CF(1) - the catalytic core - and CF(0) - the membrane proton channel. CF(1) has five subunits: alpha(3), beta(3), gamma(1), delta(1), epsilon(1). CF(0) has four main subunits: a(1), b(1), b'(1) and c(9-12).

The protein localises to the cell inner membrane. It catalyses the reaction ATP + H2O + 4 H(+)(in) = ADP + phosphate + 5 H(+)(out). Functionally, produces ATP from ADP in the presence of a proton gradient across the membrane. The alpha chain is a regulatory subunit. This is ATP synthase subunit alpha from Chlorobium chlorochromatii (strain CaD3).